Here is a 409-residue protein sequence, read N- to C-terminus: Elongation factor Tu (409 aa).

The tr-type G domain maps to Lys-10–Glu-214. Residues Gly-19–Thr-26 are G1. Residue Gly-19–Thr-26 participates in GTP binding. Thr-26 is a binding site for Mg(2+). The G2 stretch occupies residues Gly-60–Asn-64. The tract at residues Asp-81–Gly-84 is G3. Residues Asp-81–His-85 and Asn-136–Asp-139 each bind GTP. The interval Asn-136 to Asp-139 is G4. Positions Ser-174 to Leu-176 are G5.

In terms of assembly, monomer.

It localises to the cytoplasm. The enzyme catalyses GTP + H2O = GDP + phosphate + H(+). Its function is as follows. GTP hydrolase that promotes the GTP-dependent binding of aminoacyl-tRNA to the A-site of ribosomes during protein biosynthesis. In Nostoc sp. (strain PCC 7120 / SAG 25.82 / UTEX 2576), this protein is Elongation factor Tu.